We begin with the raw amino-acid sequence, 560 residues long: MKDKPAKGTPTLPATSMNVQNAILGLRGRDLISTLRNVSRQSLRHPLHTAHHLLALGGQLGRVILGDTPLQPNPRDPRFSDPTWSQNPFYRRGLQAYLAWQKQTRLWIEESHLDDDDRARAHFLFNLINDALAPSNSLLNPLAVKELFNSGGQSLVRGVAHLLDDLRHNDGLPRQVDERAFEVGGNLAATAGAVVFRNELLELIQYKPMSEKQHARPLLVVPPQINKFYIFDLSSTNSFVQYMLKNGLQVFMVSWRNPDPRHREWGLSSYVQALEEALNACRSISGNRDPNLMGACAGGLTMAALQGHLQAKHQLRRVRSATYLVSLLDSKFESPASLFADEQTIEAAKRRSYQRGVLDGAEVARIFAWMRPNDLIWNYWVNNYLLGKTPPAFDILYWNADSTRLPAALHGDLLDFFKLNPLTHPAGLEVCGTPIDLQKVELDSFTVAGSNDHITPWDAVYRSALLLGGDRRFVLANSGHIQSIINPPGNPKAYYLANPKLSSDPRAWLHDAKRSEGSWWPLWLEWITARSGPLKAPRSELGNATYPPLGPAPGTYVLTR.

The active site involves Cys-296.

Belongs to the PHA/PHB synthase family. Type II PhaC subfamily.

It functions in the pathway biopolymer metabolism; poly-(R)-3-hydroxybutanoate biosynthesis. In terms of biological role, synthesizes poly(3-hydroxyalkanoates) (PHA), complements a mutant of P.putida that does not make PHA. The protein is Poly(3-hydroxyalkanoate) polymerase 2 of Ectopseudomonas oleovorans (Pseudomonas oleovorans).